The following is a 131-amino-acid chain: RutC family protein YjgH (131 aa).

It belongs to the RutC family.

This is RutC family protein YjgH (yjgH) from Escherichia coli (strain K12).